The chain runs to 317 residues: Ribosomal RNA small subunit methyltransferase A (317 aa).

Residues asparagine 37, valine 39, glycine 64, glutamate 85, aspartate 115, and asparagine 134 each coordinate S-adenosyl-L-methionine. The tract at residues 293 to 317 is disordered; the sequence is GGSDEATSTGRDARAPDISGHASAS.

This sequence belongs to the class I-like SAM-binding methyltransferase superfamily. rRNA adenine N(6)-methyltransferase family. RsmA subfamily.

It is found in the cytoplasm. It carries out the reaction adenosine(1518)/adenosine(1519) in 16S rRNA + 4 S-adenosyl-L-methionine = N(6)-dimethyladenosine(1518)/N(6)-dimethyladenosine(1519) in 16S rRNA + 4 S-adenosyl-L-homocysteine + 4 H(+). In terms of biological role, specifically dimethylates two adjacent adenosines (A1518 and A1519) in the loop of a conserved hairpin near the 3'-end of 16S rRNA in the 30S particle. May play a critical role in biogenesis of 30S subunits. The sequence is that of Ribosomal RNA small subunit methyltransferase A from Mycobacterium bovis (strain BCG / Tokyo 172 / ATCC 35737 / TMC 1019).